The sequence spans 570 residues: Putative ABC transporter ATP-binding protein SAV2684 (570 aa).

ABC transporter domains lie at 6 to 247 (ISFK…GIRE) and 304 to 537 (LELN…ASLR). ATP contacts are provided by residues 40-47 (GASGSGKS) and 338-345 (GHNGAGKS).

It belongs to the ABC transporter superfamily.

Its subcellular location is the cell membrane. Probably part of an ABC transporter complex. Responsible for energy coupling to the transport system. This is Putative ABC transporter ATP-binding protein SAV2684 from Staphylococcus aureus (strain Mu50 / ATCC 700699).